The sequence spans 727 residues: Malate synthase G (727 aa).

Residues Val117, 124-125 (RY), Ser275, and Arg312 contribute to the acetyl-CoA site. The active-site Proton acceptor is Arg339. Residues Arg339, Glu431, and 456 to 459 (GFLD) each bind glyoxylate. Mg(2+)-binding residues include Glu431 and Asp459. Pro540 is an acetyl-CoA binding site. Cys616 is subject to Cysteine sulfenic acid (-SOH). Asp630 (proton donor) is an active-site residue.

This sequence belongs to the malate synthase family. GlcB subfamily. In terms of assembly, monomer. The cofactor is Mg(2+).

The protein localises to the cytoplasm. It carries out the reaction glyoxylate + acetyl-CoA + H2O = (S)-malate + CoA + H(+). It participates in carbohydrate metabolism; glyoxylate cycle; (S)-malate from isocitrate: step 2/2. Functionally, involved in the glycolate utilization. Catalyzes the condensation and subsequent hydrolysis of acetyl-coenzyme A (acetyl-CoA) and glyoxylate to form malate and CoA. The protein is Malate synthase G of Halalkalibacterium halodurans (strain ATCC BAA-125 / DSM 18197 / FERM 7344 / JCM 9153 / C-125) (Bacillus halodurans).